The sequence spans 180 residues: Cytokinin-beta-glucosidase 3 (180 aa).

Functionally, hydrolyzes cytokinin glucosides thus liberating free cytokinins. The sequence is that of Cytokinin-beta-glucosidase 3 (ROLC3) from Panax ginseng (Korean ginseng).